Reading from the N-terminus, the 343-residue chain is Small ribosomal subunit biogenesis GTPase RsgA (343 aa).

Residues 1–32 (MAKRRLSKRQVDRIRERQSQRLDTSVAAPDGK) form a disordered region. The segment covering 9–20 (RQVDRIRERQSQ) has biased composition (basic and acidic residues). One can recognise a CP-type G domain in the interval 109–273 (YGKLKPVAAN…CIDSPGIREF (165 aa)). GTP-binding positions include 156–159 (NKLD) and 215–223 (GQSGVGKSS). Residues Cys297, Cys302, His304, and Cys310 each contribute to the Zn(2+) site.

It belongs to the TRAFAC class YlqF/YawG GTPase family. RsgA subfamily. In terms of assembly, monomer. Associates with 30S ribosomal subunit, binds 16S rRNA. Zn(2+) serves as cofactor.

Its subcellular location is the cytoplasm. Its function is as follows. One of several proteins that assist in the late maturation steps of the functional core of the 30S ribosomal subunit. Helps release RbfA from mature subunits. May play a role in the assembly of ribosomal proteins into the subunit. Circularly permuted GTPase that catalyzes slow GTP hydrolysis, GTPase activity is stimulated by the 30S ribosomal subunit. This Saccharophagus degradans (strain 2-40 / ATCC 43961 / DSM 17024) protein is Small ribosomal subunit biogenesis GTPase RsgA.